The chain runs to 516 residues: Gamma-aminobutyrate transaminase 1, mitochondrial (516 aa).

Residues 1–47 (MVIARGLLRSNASSSSSQAINLLKYVTSTGSLQGHTQNLCDASTRHF) constitute a mitochondrion transit peptide. 171–172 (GS) is a binding site for pyridoxal 5'-phosphate. Position 204 (Tyr204) interacts with substrate. Position 311 (Asp311) interacts with pyridoxal 5'-phosphate. Lys340 serves as a coordination point for substrate. N6-(pyridoxal phosphate)lysine is present on Lys340.

This sequence belongs to the class-III pyridoxal-phosphate-dependent aminotransferase family. Expressed in roots, stems and panicles.

Its subcellular location is the mitochondrion. It catalyses the reaction 4-aminobutanoate + pyruvate = succinate semialdehyde + L-alanine. It carries out the reaction 4-aminobutanoate + glyoxylate = succinate semialdehyde + glycine. Transaminase that degrades gamma-amino butyric acid (GABA) and uses pyruvate as amino-group acceptor, but not 2-oxoglutarate. Not involved in the interaction with blast fungus. In Oryza sativa subsp. japonica (Rice), this protein is Gamma-aminobutyrate transaminase 1, mitochondrial (OSL2).